A 106-amino-acid polypeptide reads, in one-letter code: Toxin-like structure LSTX-D7 (106 aa).

The first 20 residues, 1-20 (MMKVLVVFALLVTLISYSSS), serve as a signal peptide directing secretion. A propeptide spanning residues 21 to 41 (EGIDDLEADELLSLMANEQTR) is cleaved from the precursor. 4 disulfide bridges follow: cysteine 45/cysteine 60, cysteine 52/cysteine 69, cysteine 59/cysteine 85, and cysteine 71/cysteine 83.

It belongs to the neurotoxin 19 (CSTX) family. 02 (D7) subfamily. Expressed by the venom gland.

It is found in the secreted. The protein is Toxin-like structure LSTX-D7 of Lycosa singoriensis (Wolf spider).